The sequence spans 385 residues: Taurine hydroxylase-like protein SAT17 (385 aa).

The protein operates within mycotoxin biosynthesis. Taurine hydroxylase-like protein; part of the satratoxin SC3 cluster involved in the biosynthesis of satratoxins, trichothecene mycotoxins that are associated with human food poisonings. Satratoxins are suggested to be made by products of multiple gene clusters (SC1, SC2 and SC3) that encode 21 proteins in all, including polyketide synthases, acetyltransferases, and other enzymes expected to modify the trichothecene skeleton. SC1 encodes 10 proteins, SAT1 to SAT10. The largest are SAT8, which encodes a putative polyketide synthase (PKS) with a conventional non-reducing architecture, and SAT10, a putative protein containing four ankyrin repeats and thus may be involved in protein scaffolding. The putative short-chain reductase SAT3 may assist the PKS in some capacity. SAT6 contains a secretory lipase domain and acts probably as a trichothecene esterase. SAT5 encodes a putative acetyltransferase, and so, with SAT6, may affect endogenous protection from toxicity. The probable transcription factor SAT9 may regulate the expression of the SC1 cluster. SC2 encodes proteins SAT11 to SAT16, the largest of which encodes the putative reducing PKS SAT13. SAT11 is a cytochrome P450 monooxygenase, while SAT14 and SAT16 are probable acetyltransferases. The SC2 cluster may be regulated by the transcription factor SAT15. SC3 is a small cluster that encodes 5 proteins, SAT17 to SAT21. SAT21 is a putative MFS-type transporter which may have a role in exporting secondary metabolites. The four other proteins putatively encoded in SC3 include the taurine hydroxylase-like protein SAT17, the O-methyltransferase SAT18, the acetyltransferase SAT19, and the Cys6-type zinc finger SAT20, the latter being probably involved in regulation of SC3 expression. The sequence is that of Taurine hydroxylase-like protein SAT17 from Stachybotrys chartarum (strain CBS 109288 / IBT 7711) (Toxic black mold).